Here is a 155-residue protein sequence, read N- to C-terminus: Ribosomal RNA large subunit methyltransferase H (155 aa).

S-adenosyl-L-methionine is bound by residues leucine 72, glycine 103, and 122 to 127; that span reads FGRMVW.

This sequence belongs to the RNA methyltransferase RlmH family. In terms of assembly, homodimer.

It localises to the cytoplasm. It carries out the reaction pseudouridine(1915) in 23S rRNA + S-adenosyl-L-methionine = N(3)-methylpseudouridine(1915) in 23S rRNA + S-adenosyl-L-homocysteine + H(+). Functionally, specifically methylates the pseudouridine at position 1915 (m3Psi1915) in 23S rRNA. The chain is Ribosomal RNA large subunit methyltransferase H from Paracoccus denitrificans (strain Pd 1222).